A 483-amino-acid polypeptide reads, in one-letter code: RNA-binding protein Nova-1 (483 aa).

The tract at residues 1–44 (MMAAAPIQQNGTHTGVPIDLDPPDSRKRPLEAPPEAGSTKRTNT) is disordered. Positions 27–43 (KRPLEAPPEAGSTKRTN) match the Bipartite nuclear localization signal motif. KH domains lie at 49-116 (QYFL…HGFI), 147-213 (IKQV…VELI), and 397-464 (KDVV…QYLI). The segment at 395–479 (GSKDVVEIAV…YEQGVRAANP (85 aa)) is required for RNA binding.

As to quaternary structure, interacts with PTBP2; the interaction is direct.

Its subcellular location is the nucleus. In terms of biological role, functions to regulate alternative splicing in neurons by binding pre-mRNA in a sequence-specific manner to activate exon inclusion or exclusion. It binds specifically to the sequences 5'-YCAY-3' and regulates splicing in only a subset of regulated exons. Binding to an exonic 5'-YCAY-3' cluster changes the protein complexes assembled on pre-mRNA, blocking U1 snRNP binding and exon inclusion, whereas binding to an intronic 5'-YCAY-3' cluster enhances spliceosome assembly and exon inclusion. Binding to 5'-YCAY-3' clusters results in a local and asymmetric action to regulate spliceosome assembly and alternative splicing in neurons. Binding to an exonic 5'-YCAY-3' cluster changed the protein complexes assembled on pre-mRNA, blocking U1 snRNP (small nuclear ribonucleoprotein) binding and exon inclusion, whereas binding to an intronic 5'-YCAY-3' cluster enhanced spliceosome assembly and exon inclusion. With NOVA1, they perform unique biological functions in different brain areas and cell types. Autoregulates its own expression by acting as a splicing repressor. Acts to activate the inclusion of exon E3A in the glycine receptor alpha-2 chain and of exon E9 in gamma-aminobutyric-acid receptor gamma-2 subunit via a distal downstream UCAU-rich intronic splicing enhancer. Acts to regulate a novel glycine receptor alpha-2 chain splice variant (alpha-2N) in developing spinal cord. In Macaca fascicularis (Crab-eating macaque), this protein is RNA-binding protein Nova-1 (NOVA1).